The primary structure comprises 187 residues: Elongation factor P (187 aa).

The protein belongs to the elongation factor P family.

The protein resides in the cytoplasm. It functions in the pathway protein biosynthesis; polypeptide chain elongation. In terms of biological role, involved in peptide bond synthesis. Stimulates efficient translation and peptide-bond synthesis on native or reconstituted 70S ribosomes in vitro. Probably functions indirectly by altering the affinity of the ribosome for aminoacyl-tRNA, thus increasing their reactivity as acceptors for peptidyl transferase. This chain is Elongation factor P (efp), found in Helicobacter pylori (strain J99 / ATCC 700824) (Campylobacter pylori J99).